A 693-amino-acid polypeptide reads, in one-letter code: ATP-dependent DNA helicase RecG (693 aa).

Residues 48–146 are wedge domain; sequence THLYPIGELL…GDLSTPELQE (99 aa). The region spanning 283-448 is the Helicase ATP-binding domain; sequence DMALDVPMMR…AYADLDTSVI (166 aa). Position 296 to 303 (296 to 303) interacts with ATP; it reads GDVGSGKT. A DEAH box motif is present at residues 397 to 400; sequence DEQH. The Helicase C-terminal domain maps to 482–628; sequence EGRQAYWVCT…GFVIAQKDLE (147 aa).

Belongs to the helicase family. RecG subfamily. As to quaternary structure, monomer.

The catalysed reaction is Couples ATP hydrolysis with the unwinding of duplex DNA by translocating in the 3'-5' direction.. It catalyses the reaction ATP + H2O = ADP + phosphate + H(+). Functionally, plays a critical role in recombination and DNA repair. Helps process Holliday junction intermediates to mature products by catalyzing branch migration. Has replication fork regression activity, unwinds stalled or blocked replication forks to make a HJ that can be resolved. Has a DNA unwinding activity characteristic of a DNA helicase with 3'-5' polarity. Its function is as follows. Plays a role in recovery after DNA ADP-ribosylation. This Escherichia coli O127:H6 (strain E2348/69 / EPEC) protein is ATP-dependent DNA helicase RecG.